The primary structure comprises 318 residues: Probable plastid-lipid-associated protein 1, chloroplastic (318 aa).

A chloroplast-targeting transit peptide spans 1–55; it reads MATVPLFTQFPCKTLNPSSSNTKHQSKSPILLPINSINRRSEIGVSVHRPDFKIR. Thr-57 bears the Phosphothreonine mark.

It belongs to the PAP/fibrillin family. As to quaternary structure, interacts (via N-terminus) with ABI2. In terms of tissue distribution, expressed in flower buds. Detected in tapetal cells, endothecium and connective in anthers and in subepidermal cells in filaments.

The protein resides in the plastid. Its subcellular location is the chloroplast. It is found in the plastoglobule. The protein localises to the chloroplast thylakoid. Functionally, probably involved in light/cold stress-related jasmonate (JA) biosynthesis. Contributes to the protection of photosystem II (PSII) against light stress. This Arabidopsis thaliana (Mouse-ear cress) protein is Probable plastid-lipid-associated protein 1, chloroplastic (PAP1).